The following is a 434-amino-acid chain: Exopolygalacturonase X-1 (434 aa).

A signal peptide spans 1 to 22; it reads MKLSHLLTSAVSVLSLGLTVEG. N-linked (GlcNAc...) asparagine glycans are attached at residues Asn113, Asn129, and Asn199. One copy of the PbH1 1 repeat lies at 231–252; the sequence is SKNIVIQNSVINNGDDCVSFKP. Residue Asp245 is the Proton donor of the active site. A disulfide bond links Cys247 and Cys264. 2 N-linked (GlcNAc...) asparagine glycosylation sites follow: Asn253 and Asn265. The stretch at 254–274 is one PbH1 2 repeat; sequence STEILVQNLYCNGSHGISVGS. His268 is a catalytic residue. Residues Asn292, Asn297, Asn329, Asn354, and Asn364 are each glycosylated (N-linked (GlcNAc...) asparagine). Residues 327 to 348 form a PbH1 3 repeat; that stretch reads VSNITYEDMYIENVDWAIEITQ. Residues 362–405 form a PbH1 4 repeat; it reads PSNLTISDVYISNMYGTTSSARDPNIGTIVCSSPDVCSNIYVEN. Cysteines 392 and 398 form a disulfide. Residues Asn423 and Asn430 are each glycosylated (N-linked (GlcNAc...) asparagine).

The protein belongs to the glycosyl hydrolase 28 family.

It localises to the secreted. It catalyses the reaction [(1-&gt;4)-alpha-D-galacturonosyl](n) + H2O = alpha-D-galacturonate + [(1-&gt;4)-alpha-D-galacturonosyl](n-1). Its function is as follows. Specific in hydrolyzing the terminal glycosidic bond of polygalacturonic acid and oligogalacturonates. The chain is Exopolygalacturonase X-1 (pgaX-1) from Emericella nidulans (strain FGSC A4 / ATCC 38163 / CBS 112.46 / NRRL 194 / M139) (Aspergillus nidulans).